A 325-amino-acid polypeptide reads, in one-letter code: 4-diphosphocytidyl-2-C-methyl-D-erythritol kinase (325 aa).

K22 is a catalytic residue. Position 110 to 120 (110 to 120 (PVAGGMAGGSA)) interacts with ATP. D152 is a catalytic residue. The disordered stretch occupies residues 306–325 (PAPGARVLEAVSTPSPGGRS).

This sequence belongs to the GHMP kinase family. IspE subfamily.

The catalysed reaction is 4-CDP-2-C-methyl-D-erythritol + ATP = 4-CDP-2-C-methyl-D-erythritol 2-phosphate + ADP + H(+). Its pathway is isoprenoid biosynthesis; isopentenyl diphosphate biosynthesis via DXP pathway; isopentenyl diphosphate from 1-deoxy-D-xylulose 5-phosphate: step 3/6. Its function is as follows. Catalyzes the phosphorylation of the position 2 hydroxy group of 4-diphosphocytidyl-2C-methyl-D-erythritol. The sequence is that of 4-diphosphocytidyl-2-C-methyl-D-erythritol kinase from Kineococcus radiotolerans (strain ATCC BAA-149 / DSM 14245 / SRS30216).